Reading from the N-terminus, the 632-residue chain is Extracellular metalloproteinase 1 (632 aa).

A signal peptide spans 1–19 (MHGLLLAAGLLSLPLRVLA). A propeptide spanning residues 20 to 243 (HPQPSTSLTS…VHNVVDYVSH (224 aa)) is cleaved from the precursor. Asparagine 284 carries an N-linked (GlcNAc...) asparagine glycan. Residue histidine 427 participates in Zn(2+) binding. Residue glutamate 428 is part of the active site. Residue histidine 431 participates in Zn(2+) binding. N-linked (GlcNAc...) asparagine glycosylation is found at asparagine 591 and asparagine 620.

It belongs to the peptidase M36 family. The cofactor is Zn(2+).

The protein resides in the secreted. Functionally, secreted metalloproteinase that allows assimilation of proteinaceous substrates and probably acts as a virulence factor. This chain is Extracellular metalloproteinase 1 (MEP1), found in Arthroderma gypseum (strain ATCC MYA-4604 / CBS 118893) (Microsporum gypseum).